The primary structure comprises 206 residues: Large ribosomal subunit protein uL4 (206 aa).

Positions 43–78 (ARSGNRKQKDREEVHHTTKKPWRQKGTGRARAGMSS) are disordered. The segment covering 49 to 58 (KQKDREEVHH) has biased composition (basic and acidic residues). Residues 59 to 70 (TTKKPWRQKGTG) are compositionally biased toward basic residues.

It belongs to the universal ribosomal protein uL4 family. As to quaternary structure, part of the 50S ribosomal subunit.

One of the primary rRNA binding proteins, this protein initially binds near the 5'-end of the 23S rRNA. It is important during the early stages of 50S assembly. It makes multiple contacts with different domains of the 23S rRNA in the assembled 50S subunit and ribosome. Functionally, forms part of the polypeptide exit tunnel. The polypeptide is Large ribosomal subunit protein uL4 (Herminiimonas arsenicoxydans).